Reading from the N-terminus, the 262-residue chain is 2-keto-4-pentenoate hydratase 2 (262 aa).

Belongs to the hydratase/decarboxylase family. MhpD subfamily. It depends on a divalent metal cation as a cofactor.

The enzyme catalyses (S)-4-hydroxy-2-oxopentanoate = (2Z)-2-hydroxypenta-2,4-dienoate + H2O. It participates in aromatic compound metabolism; 3-phenylpropanoate degradation. Its function is as follows. Catalyzes the conversion of 2-hydroxypentadienoic acid (enolic form of 2-oxopent-4-enoate) to 4-hydroxy-2-ketopentanoic acid. This chain is 2-keto-4-pentenoate hydratase 2, found in Dechloromonas aromatica (strain RCB).